We begin with the raw amino-acid sequence, 380 residues long: 1-deoxy-D-xylulose 5-phosphate reductoisomerase (380 aa).

6 residues coordinate NADPH: T10, G11, S12, I13, G35, and N121. K122 lines the 1-deoxy-D-xylulose 5-phosphate pocket. E123 contacts NADPH. D147 contributes to the Mn(2+) binding site. S148, E149, S173, and H196 together coordinate 1-deoxy-D-xylulose 5-phosphate. A Mn(2+)-binding site is contributed by E149. G202 provides a ligand contact to NADPH. Residues S209, N214, K215, and E218 each coordinate 1-deoxy-D-xylulose 5-phosphate. E218 contacts Mn(2+).

It belongs to the DXR family. The cofactor is Mg(2+). Mn(2+) serves as cofactor.

The enzyme catalyses 2-C-methyl-D-erythritol 4-phosphate + NADP(+) = 1-deoxy-D-xylulose 5-phosphate + NADPH + H(+). The protein operates within isoprenoid biosynthesis; isopentenyl diphosphate biosynthesis via DXP pathway; isopentenyl diphosphate from 1-deoxy-D-xylulose 5-phosphate: step 1/6. Its function is as follows. Catalyzes the NADPH-dependent rearrangement and reduction of 1-deoxy-D-xylulose-5-phosphate (DXP) to 2-C-methyl-D-erythritol 4-phosphate (MEP). This chain is 1-deoxy-D-xylulose 5-phosphate reductoisomerase, found in Lachnospira eligens (strain ATCC 27750 / DSM 3376 / VPI C15-48 / C15-B4) (Eubacterium eligens).